The sequence spans 595 residues: Probable carotenoid cleavage dioxygenase 4, chloroplastic (595 aa).

A chloroplast-targeting transit peptide spans 1 to 34 (MDSVSSSSFLSSTFSLHHSLLRRRSSSPTLLRIN). The tract at residues 41–74 (RSPITNPSDNNDRRNKPKTLHNRTNHTLVSSPPK) is disordered. Residues 55–64 (NKPKTLHNRT) show a composition bias toward basic residues. Fe cation-binding residues include histidine 287, histidine 336, histidine 404, and histidine 583.

The protein belongs to the carotenoid oxygenase family. In terms of assembly, interacts with VAR3. Interacts with PGM48. Fe(2+) is required as a cofactor. In terms of tissue distribution, mostly expressed in flowers (e.g. sepals and petals), siliques, seeds, leaves and cotyledons.

It is found in the plastid. The protein resides in the chloroplast. It localises to the plastoglobule. Functionally, may be involved in carotenoid cleavage. The protein is Probable carotenoid cleavage dioxygenase 4, chloroplastic (CCD4) of Arabidopsis thaliana (Mouse-ear cress).